Reading from the N-terminus, the 669-residue chain is Diacylglycerol lipase-beta (669 aa).

Topologically, residues 1–17 (MPGMVLFGRRWSLASDD) are cytoplasmic. Residues 18–38 (LVFPGSFELFLRVLWWIVSLT) form a helical membrane-spanning segment. Over 39 to 58 (LYLTHRRRLDCPGGVLLSTY) the chain is Extracellular. The chain crosses the membrane as a helical span at residues 59 to 79 (LIVLLVLLAVIICTVLAIVCV). Topologically, residues 80–102 (SMRGTICNPGPRKSMSKLLYIRL) are cytoplasmic. Residues 103 to 123 (ALFLPEMVWASLGAAWVAKGI) traverse the membrane as a helical segment. Residues 124-128 (QCDRT) are Extracellular-facing. A helical membrane pass occupies residues 129-149 (VVIGIIATVIVSWIVIAATMV). The Cytoplasmic segment spans residues 150–669 (TIIFVFDPLG…CPGQGGSSVP (520 aa)). Residues Ser443 and Asp495 each act as charge relay system in the active site. A phosphoserine mark is found at Ser570, Ser578, and Ser582.

The protein belongs to the AB hydrolase superfamily. Lipase family. Requires Ca(2+) as cofactor. Expressed in liver and immune cells such as macrophages and microglias. In embryonic brains present in axonal tracts, while in adults localizes to dendritic fields, correlating with the developmental change in requirement for 2-AG synthesis from the pre- to the postsynaptic compartment (at protein level).

It localises to the cell membrane. The enzyme catalyses a 1,2-diacyl-sn-glycerol + H2O = a 2-acylglycerol + a fatty acid + H(+). The catalysed reaction is 1-octadecanoyl-2-(5Z,8Z,11Z,14Z-eicosatetraenoyl)-sn-glycerol + H2O = 2-(5Z,8Z,11Z,14Z-eicosatetraenoyl)-glycerol + octadecanoate + H(+). It catalyses the reaction 1,2-di-(9Z-octadecenoyl)-sn-glycerol + H2O = 2-(9Z-octadecenoyl)-glycerol + (9Z)-octadecenoate + H(+). It carries out the reaction 1-(9Z-octadecenoyl)-2-(5Z,8Z,11Z,14Z-eicosatetraenoyl)-sn-glycerol + H2O = 2-(5Z,8Z,11Z,14Z-eicosatetraenoyl)-glycerol + (9Z)-octadecenoate + H(+). The enzyme catalyses 1-(9Z-octadecenoyl)-2-octadecanoyl-sn-glycerol + H2O = 2-octadecanoylglycerol + (9Z)-octadecenoate + H(+). The catalysed reaction is 1-(9Z-octadecenoyl)-2-(9Z,12Z-octadecadienoyl)-sn-glycerol + H2O = 2-(9Z,12Z-octadecadienoyl)-glycerol + (9Z)-octadecenoate + H(+). It catalyses the reaction 1-(9Z-octadecenoyl)-2-O-(5Z,8Z,11Z,14Z-eicosatetraenyl)-sn-glycerol + H2O = 2-O-(5Z,8Z,11Z,14Z)-eicosatetraenylglycerol + (9Z)-octadecenoate + H(+). It carries out the reaction a triacylglycerol + H2O = a diacylglycerol + a fatty acid + H(+). The enzyme catalyses 1,2,3-tri-(5Z,8Z,11Z,14Z-eicosatetraenoyl)-glycerol + H2O = 1,2-di-(5Z,8Z,11Z,14Z-eicosatetraenoyl)-glycerol + (5Z,8Z,11Z,14Z)-eicosatetraenoate + H(+). The catalysed reaction is 1,2,3-(4Z,7Z,10Z,13Z,16Z,19Z-docosahexaenoyl)-glycerol + H2O = 1,2-di-(4Z,7Z,10Z,13Z,16Z,19Z-docosahexaenoyl)-glycerol + (4Z,7Z,10Z,13Z,16Z,19Z)-docosahexaenoate + H(+). Inhibited by the 1,2,3-triazole urea covalent inhibitors KT109 and KT172. Inhibited by p-hydroxy-mercuri-benzoate and HgCl(2), but not by PMSF. Also inhibited by RHC80267, a drug that blocks 2-AG formation. Its function is as follows. Lipase that catalyzes the hydrolysis of arachidonic acid (AA)-esterified diacylglycerols (DAGs) to produce the principal endocannabinoid, 2-arachidonoylglycerol (2-AG) which can be further cleaved by downstream enzymes to release arachidonic acid (AA) for cyclooxygenase (COX)-mediated eicosanoid production. Preferentially hydrolyzes DAGs at the sn-1 position in a calcium-dependent manner and has negligible activity against other lipids including monoacylglycerols and phospholipids. Plays a key role in the regulation of 2-AG and AA pools utilized by COX1/2 to generate lipid mediators of macrophage and microglia inflammatory responses. Also functions as a polyunsaturated fatty acids-specific triacylglycerol lipase in macrophages. Plays an important role to support the metabolic and signaling demands of macrophages. The polypeptide is Diacylglycerol lipase-beta (Daglb) (Mus musculus (Mouse)).